Consider the following 424-residue polypeptide: Elongation factor 1-alpha (424 aa).

The tr-type G domain maps to 5-223 (KPHLNLAFIG…NALKEPQKPV (219 aa)). The tract at residues 14–21 (GHVDHGKS) is G1. Position 14–21 (14–21 (GHVDHGKS)) interacts with GTP. Serine 21 is a binding site for Mg(2+). The interval 70-74 (GVTID) is G2. The segment at 91–94 (DCPG) is G3. Residues 91-95 (DCPGH) and 146-149 (NKMD) each bind GTP. The segment at 146 to 149 (NKMD) is G4. The segment at 187-189 (SAY) is G5.

This sequence belongs to the TRAFAC class translation factor GTPase superfamily. Classic translation factor GTPase family. EF-Tu/EF-1A subfamily.

The protein localises to the cytoplasm. The catalysed reaction is GTP + H2O = GDP + phosphate + H(+). Its function is as follows. GTP hydrolase that promotes the GTP-dependent binding of aminoacyl-tRNA to the A-site of ribosomes during protein biosynthesis. The polypeptide is Elongation factor 1-alpha (Methanothrix thermoacetophila (strain DSM 6194 / JCM 14653 / NBRC 101360 / PT) (Methanosaeta thermophila)).